The following is a 242-amino-acid chain: Ribosomal RNA small subunit methyltransferase G (242 aa).

Residues Gly-81, Phe-86, 104–106 (DST), 132–133 (AE), and Arg-151 each bind S-adenosyl-L-methionine.

Belongs to the methyltransferase superfamily. RNA methyltransferase RsmG family.

The protein localises to the cytoplasm. In terms of biological role, specifically methylates the N7 position of a guanine in 16S rRNA. The protein is Ribosomal RNA small subunit methyltransferase G of Synechococcus elongatus (strain ATCC 33912 / PCC 7942 / FACHB-805) (Anacystis nidulans R2).